Here is a 944-residue protein sequence, read N- to C-terminus: Neutral alpha-glucosidase AB (944 aa).

An N-terminal signal peptide occupies residues 1-32 (MAAIAAVAARRRRSWLSLVLAYLGVCLGITLA). Cys41 and Cys47 form a disulfide bridge. Ser52 is subject to Phosphoserine. Asn97 carries an N-linked (GlcNAc...) asparagine glycan. Positions 180 to 238 (HQRAPRVPQESKDPAEGNGAQPEATPGDGDKPEETQEKAEKDEPGAWEETFKTHSDSKP) are disordered. The segment covering 207–236 (DGDKPEETQEKAEKDEPGAWEETFKTHSDS) has biased composition (basic and acidic residues). Substrate is bound by residues Asp283 and Asp429. Asp542 functions as the Nucleophile in the catalytic mechanism. Arg602 contributes to the substrate binding site. Catalysis depends on Asp618, which acts as the Proton donor. An intrachain disulfide couples Cys633 to Cys644. His676 provides a ligand contact to substrate.

It belongs to the glycosyl hydrolase 31 family. As to quaternary structure, heterodimer of a catalytic alpha subunit (GANAB) and a beta subunit (PRKCSH). Binds glycosylated PTPRC.

The protein resides in the endoplasmic reticulum. It localises to the golgi apparatus. The protein localises to the melanosome. It carries out the reaction N(4)-(alpha-D-Glc-(1-&gt;3)-alpha-D-Man-(1-&gt;2)-alpha-D-Man-(1-&gt;2)-alpha-D-Man-(1-&gt;3)-[alpha-D-Man-(1-&gt;2)-alpha-D-Man-(1-&gt;3)-[alpha-D-Man-(1-&gt;2)-alpha-D-Man-(1-&gt;6)]-alpha-D-Man-(1-&gt;6)]-beta-D-Man-(1-&gt;4)-beta-D-GlcNAc-(1-&gt;4)-beta-D-GlcNAc)-L-asparaginyl-[protein] + H2O = N(4)-(alpha-D-Man-(1-&gt;2)-alpha-D-Man-(1-&gt;2)-alpha-D-Man-(1-&gt;3)-[alpha-D-Man-(1-&gt;2)-alpha-D-Man-(1-&gt;3)-[alpha-D-Man-(1-&gt;2)-alpha-D-Man-(1-&gt;6)]-alpha-D-Man-(1-&gt;6)]-beta-D-Man-(1-&gt;4)-beta-D-GlcNAc-(1-&gt;4)-beta-D-GlcNAc)-L-asparaginyl-[protein] (N-glucan mannose isomer 9A1,2,3B1,2,3) + beta-D-glucose. It catalyses the reaction N(4)-(alpha-D-Glc-(1-&gt;3)-alpha-D-Glc-(1-&gt;3)-alpha-D-Man-(1-&gt;2)-alpha-D-Man-(1-&gt;2)-alpha-D-Man-(1-&gt;3)-[alpha-D-Man-(1-&gt;2)-alpha-D-Man-(1-&gt;3)-[alpha-D-Man-(1-&gt;2)-alpha-D-Man-(1-&gt;6)]-alpha-D-Man-(1-&gt;6)]-beta-D-Man-(1-&gt;4)-beta-D-GlcNAc-(1-&gt;4)-beta-D-GlcNAc)-L-asparaginyl-[protein] + H2O = N(4)-(alpha-D-Glc-(1-&gt;3)-alpha-D-Man-(1-&gt;2)-alpha-D-Man-(1-&gt;2)-alpha-D-Man-(1-&gt;3)-[alpha-D-Man-(1-&gt;2)-alpha-D-Man-(1-&gt;3)-[alpha-D-Man-(1-&gt;2)-alpha-D-Man-(1-&gt;6)]-alpha-D-Man-(1-&gt;6)]-beta-D-Man-(1-&gt;4)-beta-D-GlcNAc-(1-&gt;4)-beta-D-GlcNAc)-L-asparaginyl-[protein] + beta-D-glucose. The protein operates within glycan metabolism; N-glycan metabolism. Functionally, catalytic subunit of glucosidase II that cleaves sequentially the 2 innermost alpha-1,3-linked glucose residues from the Glc(2)Man(9)GlcNAc(2) oligosaccharide precursor of immature glycoproteins. Required for PKD1/Polycystin-1 and PKD2/Polycystin-2 maturation and localization to the cell surface and cilia. The chain is Neutral alpha-glucosidase AB from Mus musculus (Mouse).